The chain runs to 604 residues: UvrABC system protein C (604 aa).

The 79-residue stretch at 17-95 folds into the GIY-YIG domain; that stretch reads AQPGVYRMLN…IKSLAPRYNI (79 aa). Residues 204 to 239 enclose the UVR domain; that stretch reads DEVLKTIEQKMFTASDQQDYEQAAQLRDQMQALRKI.

The protein belongs to the UvrC family. As to quaternary structure, interacts with UvrB in an incision complex.

It is found in the cytoplasm. The UvrABC repair system catalyzes the recognition and processing of DNA lesions. UvrC both incises the 5' and 3' sides of the lesion. The N-terminal half is responsible for the 3' incision and the C-terminal half is responsible for the 5' incision. The sequence is that of UvrABC system protein C from Nitrosomonas europaea (strain ATCC 19718 / CIP 103999 / KCTC 2705 / NBRC 14298).